We begin with the raw amino-acid sequence, 874 residues long: Alanine--tRNA ligase (874 aa).

Zn(2+) contacts are provided by His564, His568, Cys665, and His669.

This sequence belongs to the class-II aminoacyl-tRNA synthetase family. It depends on Zn(2+) as a cofactor.

The protein localises to the cytoplasm. The enzyme catalyses tRNA(Ala) + L-alanine + ATP = L-alanyl-tRNA(Ala) + AMP + diphosphate. Its function is as follows. Catalyzes the attachment of alanine to tRNA(Ala) in a two-step reaction: alanine is first activated by ATP to form Ala-AMP and then transferred to the acceptor end of tRNA(Ala). Also edits incorrectly charged Ser-tRNA(Ala) and Gly-tRNA(Ala) via its editing domain. The sequence is that of Alanine--tRNA ligase from Burkholderia mallei (strain ATCC 23344).